A 333-amino-acid polypeptide reads, in one-letter code: 4-hydroxy-2-oxovalerate aldolase (333 aa).

The region spanning 4–254 (VKIFDLTLRD…DCGIDLYKTM (251 aa)) is the Pyruvate carboxyltransferase domain. Residue 12–13 (RD) coordinates substrate. Asp-13 contacts Mn(2+). His-16 (proton acceptor) is an active-site residue. Substrate is bound at residue His-193. 2 residues coordinate Mn(2+): His-193 and His-195. A substrate-binding site is contributed by Tyr-284.

This sequence belongs to the 4-hydroxy-2-oxovalerate aldolase family.

The catalysed reaction is (S)-4-hydroxy-2-oxopentanoate = acetaldehyde + pyruvate. The protein is 4-hydroxy-2-oxovalerate aldolase of Desulfitobacterium hafniense (strain DSM 10664 / DCB-2).